Consider the following 378-residue polypeptide: Chaperone protein DnaJ (378 aa).

The J domain occupies 5–70; that stretch reads DYYESLGVAK…QKRAAYDQYG (66 aa). The CR-type zinc finger occupies 133-211; sequence GVTKEIRIPA…CHGHGRVEKS (79 aa). Cysteine 146, cysteine 149, cysteine 163, cysteine 166, cysteine 185, cysteine 188, cysteine 199, and cysteine 202 together coordinate Zn(2+). CXXCXGXG motif repeat units follow at residues 146–153, 163–170, 185–192, and 199–206; these read CDVCHGNG, CPTCHGNG, CPHCHGRG, and CVKCHGHG.

This sequence belongs to the DnaJ family. Homodimer. Requires Zn(2+) as cofactor.

The protein localises to the cytoplasm. Participates actively in the response to hyperosmotic and heat shock by preventing the aggregation of stress-denatured proteins and by disaggregating proteins, also in an autonomous, DnaK-independent fashion. Unfolded proteins bind initially to DnaJ; upon interaction with the DnaJ-bound protein, DnaK hydrolyzes its bound ATP, resulting in the formation of a stable complex. GrpE releases ADP from DnaK; ATP binding to DnaK triggers the release of the substrate protein, thus completing the reaction cycle. Several rounds of ATP-dependent interactions between DnaJ, DnaK and GrpE are required for fully efficient folding. Also involved, together with DnaK and GrpE, in the DNA replication of plasmids through activation of initiation proteins. The sequence is that of Chaperone protein DnaJ from Pectobacterium carotovorum subsp. carotovorum (strain PC1).